Reading from the N-terminus, the 335-residue chain is 3-dehydroquinate synthase (335 aa).

NAD(+) is bound by residues D56–K61, G90–D94, T114–T115, K127, K135, and F153–T156. Zn(2+) contacts are provided by E168, H227, and H243.

Belongs to the sugar phosphate cyclases superfamily. Dehydroquinate synthase family. NAD(+) serves as cofactor. Co(2+) is required as a cofactor. Requires Zn(2+) as cofactor.

It is found in the cytoplasm. It catalyses the reaction 7-phospho-2-dehydro-3-deoxy-D-arabino-heptonate = 3-dehydroquinate + phosphate. The protein operates within metabolic intermediate biosynthesis; chorismate biosynthesis; chorismate from D-erythrose 4-phosphate and phosphoenolpyruvate: step 2/7. In terms of biological role, catalyzes the conversion of 3-deoxy-D-arabino-heptulosonate 7-phosphate (DAHP) to dehydroquinate (DHQ). The sequence is that of 3-dehydroquinate synthase from Pyrococcus furiosus (strain ATCC 43587 / DSM 3638 / JCM 8422 / Vc1).